We begin with the raw amino-acid sequence, 472 residues long: Uronate isomerase (472 aa).

This sequence belongs to the metallo-dependent hydrolases superfamily. Uronate isomerase family.

The enzyme catalyses D-glucuronate = D-fructuronate. It carries out the reaction aldehydo-D-galacturonate = keto-D-tagaturonate. The protein operates within carbohydrate metabolism; pentose and glucuronate interconversion. The polypeptide is Uronate isomerase (Xanthomonas oryzae pv. oryzae (strain MAFF 311018)).